The primary structure comprises 639 residues: Methyl-accepting chemotaxis protein McpS (639 aa).

Over 1-13 the chain is Cytoplasmic; the sequence is MNSWFANISVNLK. A helical transmembrane segment spans residues 14 to 34; it reads LGLGFGLVLVLTGLLALTGWT. Residues 35–288 lie on the Periplasmic side of the membrane; that stretch reads SLGSLIDRSN…RDIESTQARS (254 aa). One can recognise an HBM domain in the interval 41–283; sequence DRSNWMGDIG…IQLERRDIES (243 aa). 60-65 is a (S)-malate binding site; the sequence is RIARLQ. 60–65 is a binding site for succinate; that stretch reads RIARLQ. Acetate contacts are provided by Asp138, Arg183, Arg187, and Tyr236. Positions 191-245 form a coiled coil; that stretch reads AENSSANEQAALRQLDAALADTDNLKRQLPSEDARLQQFENAVLAYRDAVRQFRD. (S)-malate contacts are provided by Arg254 and Thr258. Arg254 lines the succinate pocket. The chain crosses the membrane as a helical span at residues 289 to 309; it reads LQAIATLLALLVGVLAAVLIT. In terms of domain architecture, HAMP spans 310-362; it reads RQITRPLQDTLVAVEKIASGDLTQHMRVTRRDELGVLQQGIARMGTTLRELIS. Residues 310–639 are Cytoplasmic-facing; the sequence is RQITRPLQDT…LQTLVSQFRV (330 aa). In terms of domain architecture, Methyl-accepting transducer spans 367–603; the sequence is GVTQIASAAE…EISRSILNVR (237 aa).

The protein belongs to the methyl-accepting chemotaxis (MCP) protein family. In terms of assembly, homodimer. Exists as a mixture of monomers and dimers in solution. Ligand binding stabilizes the dimeric form. In terms of processing, methylated by CheR2.

The protein localises to the cell membrane. With respect to regulation, binding of citrate to the ligand-binding domain reduces the chemotaxis towards the strong attractants such as malate and succinate. However, in physiologically relevant niches, citrate is mostly complexed with magnesium or calcium ions, and does not bind McpS. Its function is as follows. Chemotactic-signal transducers respond to changes in the concentration of attractants and repellents in the environment, transduce a signal from the outside to the inside of the cell, and facilitate sensory adaptation through the variation of the level of methylation. McpS is a specific chemoreceptor for 6 tricarboxylic acid (TCA) cycle intermediates (succinate, fumarate, malate, oxaloacetate, citrate and isocitrate), butyrate and acetate. Malate, succinate, fumarate and oxaloacetate cause the strongest chemotactic response. This chain is Methyl-accepting chemotaxis protein McpS (mcpS), found in Pseudomonas putida (strain ATCC 47054 / DSM 6125 / CFBP 8728 / NCIMB 11950 / KT2440).